The sequence spans 365 residues: Flagellar P-ring protein (365 aa).

The signal sequence occupies residues M1–A22.

This sequence belongs to the FlgI family. In terms of assembly, the basal body constitutes a major portion of the flagellar organelle and consists of four rings (L,P,S, and M) mounted on a central rod.

It localises to the periplasm. The protein localises to the bacterial flagellum basal body. Its function is as follows. Assembles around the rod to form the L-ring and probably protects the motor/basal body from shearing forces during rotation. The protein is Flagellar P-ring protein of Marinobacter nauticus (strain ATCC 700491 / DSM 11845 / VT8) (Marinobacter aquaeolei).